Reading from the N-terminus, the 246-residue chain is 1-(5-phosphoribosyl)-5-[(5-phosphoribosylamino)methylideneamino] imidazole-4-carboxamide isomerase (246 aa).

The active-site Proton acceptor is aspartate 8. Aspartate 129 (proton donor) is an active-site residue.

The protein belongs to the HisA/HisF family.

It is found in the cytoplasm. It catalyses the reaction 1-(5-phospho-beta-D-ribosyl)-5-[(5-phospho-beta-D-ribosylamino)methylideneamino]imidazole-4-carboxamide = 5-[(5-phospho-1-deoxy-D-ribulos-1-ylimino)methylamino]-1-(5-phospho-beta-D-ribosyl)imidazole-4-carboxamide. It functions in the pathway amino-acid biosynthesis; L-histidine biosynthesis; L-histidine from 5-phospho-alpha-D-ribose 1-diphosphate: step 4/9. The protein is 1-(5-phosphoribosyl)-5-[(5-phosphoribosylamino)methylideneamino] imidazole-4-carboxamide isomerase of Nitrobacter hamburgensis (strain DSM 10229 / NCIMB 13809 / X14).